Reading from the N-terminus, the 92-residue chain is Probable Fe(2+)-trafficking protein (92 aa).

Belongs to the Fe(2+)-trafficking protein family.

In terms of biological role, could be a mediator in iron transactions between iron acquisition and iron-requiring processes, such as synthesis and/or repair of Fe-S clusters in biosynthetic enzymes. This chain is Probable Fe(2+)-trafficking protein, found in Xanthomonas campestris pv. campestris (strain 8004).